We begin with the raw amino-acid sequence, 137 residues long: Probable disulfide formation protein C (137 aa).

Residues 6–25 form a helical membrane-spanning segment; the sequence is ENLMLGSWLTALTAMLGSLY. A disulfide bridge connects residues C35 and C38. Helical transmembrane passes span 40–59 and 66–83; these read YQRI…YLKR and YSLW…YHYS. Residues C97 and C102 are joined by a disulfide bond. Residues 111-133 traverse the membrane as a helical segment; it reads GFVTIPFLAFTAFVIIFICSLLI.

This sequence belongs to the DsbB family. BdbC subfamily.

The protein localises to the cell membrane. Functionally, required for disulfide bond formation in some proteins. This Halalkalibacterium halodurans (strain ATCC BAA-125 / DSM 18197 / FERM 7344 / JCM 9153 / C-125) (Bacillus halodurans) protein is Probable disulfide formation protein C.